The chain runs to 316 residues: tRNA dimethylallyltransferase (316 aa).

17–24 (GPTASGKT) is an ATP binding site. 19–24 (TASGKT) contacts substrate. Interaction with substrate tRNA regions lie at residues 42-45 (DSAL), 166-170 (QRLSR), and 247-252 (RCVGYR).

The protein belongs to the IPP transferase family. As to quaternary structure, monomer. Mg(2+) serves as cofactor.

The catalysed reaction is adenosine(37) in tRNA + dimethylallyl diphosphate = N(6)-dimethylallyladenosine(37) in tRNA + diphosphate. Catalyzes the transfer of a dimethylallyl group onto the adenine at position 37 in tRNAs that read codons beginning with uridine, leading to the formation of N6-(dimethylallyl)adenosine (i(6)A). This is tRNA dimethylallyltransferase from Salmonella enteritidis PT4 (strain P125109).